The following is a 363-amino-acid chain: DNA replication and repair protein RecF (363 aa).

30-37 serves as a coordination point for ATP; sequence GNNAQGKT.

It belongs to the RecF family.

The protein resides in the cytoplasm. In terms of biological role, the RecF protein is involved in DNA metabolism; it is required for DNA replication and normal SOS inducibility. RecF binds preferentially to single-stranded, linear DNA. It also seems to bind ATP. In Clostridium acetobutylicum (strain ATCC 824 / DSM 792 / JCM 1419 / IAM 19013 / LMG 5710 / NBRC 13948 / NRRL B-527 / VKM B-1787 / 2291 / W), this protein is DNA replication and repair protein RecF.